Here is a 429-residue protein sequence, read N- to C-terminus: Enolase (429 aa).

Glutamine 163 contributes to the (2R)-2-phosphoglycerate binding site. Glutamate 205 (proton donor) is an active-site residue. Mg(2+)-binding residues include aspartate 242, glutamate 285, and aspartate 312. (2R)-2-phosphoglycerate is bound by residues lysine 337, arginine 366, serine 367, and lysine 388. Catalysis depends on lysine 337, which acts as the Proton acceptor.

It belongs to the enolase family. In terms of assembly, component of the RNA degradosome, a multiprotein complex involved in RNA processing and mRNA degradation. Mg(2+) is required as a cofactor.

It is found in the cytoplasm. The protein localises to the secreted. It localises to the cell surface. It catalyses the reaction (2R)-2-phosphoglycerate = phosphoenolpyruvate + H2O. It participates in carbohydrate degradation; glycolysis; pyruvate from D-glyceraldehyde 3-phosphate: step 4/5. Functionally, catalyzes the reversible conversion of 2-phosphoglycerate (2-PG) into phosphoenolpyruvate (PEP). It is essential for the degradation of carbohydrates via glycolysis. This Alkalilimnicola ehrlichii (strain ATCC BAA-1101 / DSM 17681 / MLHE-1) protein is Enolase.